The sequence spans 121 residues: Small ribosomal subunit protein uS13 (121 aa).

The tract at residues 94 to 121 is disordered; the sequence is GLPLRGQRTRTNARTRKGPRRAAQALKK.

It belongs to the universal ribosomal protein uS13 family. Part of the 30S ribosomal subunit. Forms a loose heterodimer with protein S19. Forms two bridges to the 50S subunit in the 70S ribosome.

Its function is as follows. Located at the top of the head of the 30S subunit, it contacts several helices of the 16S rRNA. In the 70S ribosome it contacts the 23S rRNA (bridge B1a) and protein L5 of the 50S subunit (bridge B1b), connecting the 2 subunits; these bridges are implicated in subunit movement. Contacts the tRNAs in the A and P-sites. The sequence is that of Small ribosomal subunit protein uS13 from Burkholderia mallei (strain NCTC 10247).